Reading from the N-terminus, the 239-residue chain is C-8 sterol isomerase erg2 (239 aa).

The N-linked (GlcNAc...) asparagine glycan is linked to asparagine 11. The helical transmembrane segment at 27 to 47 threads the bilayer; the sequence is KFGFLAVFVAIFAALYSYLDA. Asparagine 73 carries an N-linked (GlcNAc...) asparagine glycan.

The protein belongs to the ERG2 family.

The protein localises to the endoplasmic reticulum membrane. It catalyses the reaction fecosterol = episterol. The protein operates within steroid metabolism; ergosterol biosynthesis. Its function is as follows. C-8 sterol isomerase; part of the third module of ergosterol biosynthesis pathway that includes the late steps of the pathway. Erg2 catalyzes the reaction which results in unsaturation at C-7 in the B ring of sterols and thus converts fecosterol to episterol. The third module or late pathway involves the ergosterol synthesis itself through consecutive reactions that mainly occur in the endoplasmic reticulum (ER) membrane. Firstly, the squalene synthase erg9 catalyzes the condensation of 2 farnesyl pyrophosphate moieties to form squalene, which is the precursor of all steroids. Squalene synthase is crucial for balancing the incorporation of farnesyl diphosphate (FPP) into sterol and nonsterol isoprene synthesis. Secondly, squalene is converted into lanosterol by the consecutive action of the squalene epoxidase erg1 and the lanosterol synthase erg7. Then, the delta(24)-sterol C-methyltransferase erg6 methylates lanosterol at C-24 to produce eburicol. Eburicol is the substrate of the sterol 14-alpha demethylase encoded by cyp51A and cyp51B, to yield 4,4,24-trimethyl ergosta-8,14,24(28)-trienol. The C-14 reductase erg24 then reduces the C14=C15 double bond which leads to 4,4-dimethylfecosterol. A sequence of further demethylations at C-4, involving the C-4 demethylation complex containing the C-4 methylsterol oxidases erg25A or erg25B, the sterol-4-alpha-carboxylate 3-dehydrogenase erg26 and the 3-keto-steroid reductase erg27, leads to the production of fecosterol via 4-methylfecosterol. The C-8 sterol isomerase erg2 then catalyzes the reaction which results in unsaturation at C-7 in the B ring of sterols and thus converts fecosterol to episterol. The sterol-C5-desaturase erg3B then catalyzes the introduction of a C-5 double bond in the B ring to produce 5-dehydroepisterol. The 2 other sterol-C5-desaturases, erg3A and erg3C, seem to be less important in ergosterol biosynthesis. The C-22 sterol desaturase erg5 further converts 5-dehydroepisterol into ergosta-5,7,22,24(28)-tetraen-3beta-ol by forming the C-22(23) double bond in the sterol side chain. Finally, ergosta-5,7,22,24(28)-tetraen-3beta-ol is substrate of the C-24(28) sterol reductases erg4A and erg4B to produce ergosterol. Possible alternative sterol biosynthetic pathways might exist from fecosterol to ergosterol, depending on the activities of the erg3 isoforms. The protein is C-8 sterol isomerase erg2 of Aspergillus fumigatus (strain ATCC MYA-4609 / CBS 101355 / FGSC A1100 / Af293) (Neosartorya fumigata).